The following is a 287-amino-acid chain: 3-methyl-2-oxobutanoate hydroxymethyltransferase (287 aa).

Mg(2+) is bound by residues aspartate 57 and aspartate 96. 3-methyl-2-oxobutanoate is bound by residues 57–58, aspartate 96, and lysine 125; that span reads DS. Residue glutamate 127 coordinates Mg(2+). Catalysis depends on glutamate 194, which acts as the Proton acceptor.

The protein belongs to the PanB family. Homodecamer; pentamer of dimers. The cofactor is Mg(2+).

The protein resides in the cytoplasm. The catalysed reaction is 3-methyl-2-oxobutanoate + (6R)-5,10-methylene-5,6,7,8-tetrahydrofolate + H2O = 2-dehydropantoate + (6S)-5,6,7,8-tetrahydrofolate. It participates in cofactor biosynthesis; (R)-pantothenate biosynthesis; (R)-pantoate from 3-methyl-2-oxobutanoate: step 1/2. Functionally, catalyzes the reversible reaction in which hydroxymethyl group from 5,10-methylenetetrahydrofolate is transferred onto alpha-ketoisovalerate to form ketopantoate. The chain is 3-methyl-2-oxobutanoate hydroxymethyltransferase from Methylobacterium sp. (strain 4-46).